Consider the following 330-residue polypeptide: DNA-directed RNA polymerase subunit alpha (330 aa).

Residues 1–236 (MQGSVTEFLK…EQLDAFVDLR (236 aa)) are alpha N-terminal domain (alpha-NTD). The tract at residues 250–330 (FDPILLRPVD…NWPPASIAED (81 aa)) is alpha C-terminal domain (alpha-CTD).

This sequence belongs to the RNA polymerase alpha chain family. In terms of assembly, homodimer. The RNAP catalytic core consists of 2 alpha, 1 beta, 1 beta' and 1 omega subunit. When a sigma factor is associated with the core the holoenzyme is formed, which can initiate transcription.

The catalysed reaction is RNA(n) + a ribonucleoside 5'-triphosphate = RNA(n+1) + diphosphate. DNA-dependent RNA polymerase catalyzes the transcription of DNA into RNA using the four ribonucleoside triphosphates as substrates. This is DNA-directed RNA polymerase subunit alpha from Vibrio atlanticus (strain LGP32) (Vibrio splendidus (strain Mel32)).